Consider the following 141-residue polypeptide: Acetyltransferase YpeA (141 aa).

The 141-residue stretch at 1–141 (MEIRVFRQED…GKRLIEDEEY (141 aa)) folds into the N-acetyltransferase domain.

This sequence belongs to the acetyltransferase family. YpeA subfamily.

This is Acetyltransferase YpeA from Shigella boydii serotype 4 (strain Sb227).